Reading from the N-terminus, the 614-residue chain is Pyruvate decarboxylase 2 (614 aa).

Substrate is bound by residues D50 and H137. The segment at 415–523 (DSWFNCQKLK…FLINNGGYTI (109 aa)) is thiamine pyrophosphate binding. Residues D491, N518, and G520 each coordinate Mg(2+). A substrate-binding site is contributed by E524.

The protein belongs to the TPP enzyme family. As to quaternary structure, homotetramer. Requires a metal cation as cofactor. Thiamine diphosphate is required as a cofactor. As to expression, pollen.

It carries out the reaction a 2-oxocarboxylate + H(+) = an aldehyde + CO2. This chain is Pyruvate decarboxylase 2 (PDC2), found in Nicotiana tabacum (Common tobacco).